A 154-amino-acid polypeptide reads, in one-letter code: UPF0178 protein ABC1688 (154 aa).

The protein belongs to the UPF0178 family.

The polypeptide is UPF0178 protein ABC1688 (Shouchella clausii (strain KSM-K16) (Alkalihalobacillus clausii)).